We begin with the raw amino-acid sequence, 119 residues long: Large ribosomal subunit protein uL14 (119 aa).

This sequence belongs to the universal ribosomal protein uL14 family. As to quaternary structure, part of the 50S ribosomal subunit. Forms a cluster with proteins L3 and L19. In the 70S ribosome, L14 and L19 interact and together make contacts with the 16S rRNA in bridges B5 and B8.

Binds to 23S rRNA. Forms part of two intersubunit bridges in the 70S ribosome. This is Large ribosomal subunit protein uL14 from Ehrlichia canis (strain Jake).